The following is a 470-amino-acid chain: Flavin-containing monooxygenase FMO GS-OX-like 6 (470 aa).

An FAD-binding site is contributed by 17–22 (GAGAAG). An NADP(+)-binding site is contributed by 214-219 (GYQSSG).

This sequence belongs to the FMO family. Requires FAD as cofactor.

In terms of biological role, catalyzes the conversion of methylthioalkyl glucosinolates of any chain length into methylsulfinylalkyl glucosinolates. This is Flavin-containing monooxygenase FMO GS-OX-like 6 from Arabidopsis thaliana (Mouse-ear cress).